A 485-amino-acid chain; its full sequence is Delta(14)-sterol reductase (485 aa).

5 helical membrane passes run 18–38 (FFGP…VYVF), 77–97 (GLVS…SLIL), 131–151 (LAIL…WTFI), 155–175 (FIQI…FVYV), and 319–339 (SLGP…FYIF). NADP(+)-binding positions include Lys346, Arg350, Leu373, Trp378, and 385–386 (NY). A helical transmembrane segment spans residues 431–451 (AKGWGMLITYFYILYFAILLI). NADP(+)-binding positions include Asp457, 461-465 (CHRKY), and Tyr472.

Belongs to the ERG4/ERG24 family.

It is found in the membrane. It catalyses the reaction 4,4-dimethyl-5alpha-cholesta-8,24-dien-3beta-ol + NADP(+) = 4,4-dimethyl-5alpha-cholesta-8,14,24-trien-3beta-ol + NADPH + H(+). It participates in steroid biosynthesis; zymosterol biosynthesis; zymosterol from lanosterol: step 2/6. In terms of biological role, reduces the C14=C15 double bond of 4,4-dimethyl-cholesta-8,14,24-trienol to produce 4,4-dimethyl-cholesta-8,24-dienol. The protein is Delta(14)-sterol reductase of Fusarium vanettenii (Neocosmospora pisi).